The following is a 307-amino-acid chain: MLATILDGNKISAEIKTEVAAEVAELKAKGLTPGLAVVLVGHNPASEIYVRNKVKACEMTGIYSEQHTPPDTVSTADLLQLVESLNRRNDIDGILVQLPLPKQVDSKKILLAVSPEKDVDGFHPMNVGYLSTVRPGLVPCTPAGCMEILRRSNVPVEGADAVVVGRSDIVGKPIAMLLTNANATVTICHSKTHDLPAVCRRADILVAAIGRPGMITPDFVKPGATVLDVGINKITDRAEFEKFFAGDAKREAAFAKNGSTLVGDCHPKVAEVAGAFTPVPGGVGPLTIAMLMANTVKAAKLRRGNTV.

NADP(+) is bound by residues 165–167, Ser-190, and Ile-231; that span reads GRS.

It belongs to the tetrahydrofolate dehydrogenase/cyclohydrolase family. In terms of assembly, homodimer.

The catalysed reaction is (6R)-5,10-methylene-5,6,7,8-tetrahydrofolate + NADP(+) = (6R)-5,10-methenyltetrahydrofolate + NADPH. It carries out the reaction (6R)-5,10-methenyltetrahydrofolate + H2O = (6R)-10-formyltetrahydrofolate + H(+). Its pathway is one-carbon metabolism; tetrahydrofolate interconversion. In terms of biological role, catalyzes the oxidation of 5,10-methylenetetrahydrofolate to 5,10-methenyltetrahydrofolate and then the hydrolysis of 5,10-methenyltetrahydrofolate to 10-formyltetrahydrofolate. The chain is Bifunctional protein FolD from Koribacter versatilis (strain Ellin345).